A 147-amino-acid chain; its full sequence is Large ribosomal subunit protein uL16 (147 aa).

Belongs to the universal ribosomal protein uL16 family. Part of the 50S ribosomal subunit.

Functionally, binds 23S rRNA and is also seen to make contacts with the A and possibly P site tRNAs. This is Large ribosomal subunit protein uL16 from Finegoldia magna (strain ATCC 29328 / DSM 20472 / WAL 2508) (Peptostreptococcus magnus).